Reading from the N-terminus, the 180-residue chain is ATP-dependent protease subunit HslV (180 aa).

Residue T7 is part of the active site. 3 residues coordinate Na(+): G165, C168, and T171.

The protein belongs to the peptidase T1B family. HslV subfamily. As to quaternary structure, a double ring-shaped homohexamer of HslV is capped on each side by a ring-shaped HslU homohexamer. The assembly of the HslU/HslV complex is dependent on binding of ATP.

It localises to the cytoplasm. It carries out the reaction ATP-dependent cleavage of peptide bonds with broad specificity.. With respect to regulation, allosterically activated by HslU binding. Functionally, protease subunit of a proteasome-like degradation complex believed to be a general protein degrading machinery. This Bacillus cereus (strain Q1) protein is ATP-dependent protease subunit HslV.